The sequence spans 246 residues: Sensory transduction protein LytT (246 aa).

The Response regulatory domain maps to 3–117; it reads KVLVVDDEML…RIVQTLKKYK (115 aa). Asp-54 carries the post-translational modification 4-aspartylphosphate. The 105-residue stretch at 142-246 folds into the HTH LytTR-type domain; it reads LALPIEESIV…AKELKKLLRI (105 aa).

Post-translationally, phosphorylated by LytS.

It localises to the cytoplasm. Member of the two-component regulatory system LytS/LytT that probably regulates genes involved in cell wall metabolism. The sequence is that of Sensory transduction protein LytT (lytT) from Bacillus anthracis.